Here is a 67-residue protein sequence, read N- to C-terminus: Arasin 2 (67 aa).

A signal peptide spans 1 to 25 (MERRTLLVVLLVCSCVVAAAAEASP). The disordered stretch occupies residues 22–44 (EASPSRWPSPGRPRPFPGRPNPI). Pro residues predominate over residues 31–44 (PGRPRPFPGRPNPI). 2 cysteine pairs are disulfide-bonded: Cys50–Cys59 and Cys52–Cys57.

Interacts with chitin through the N-terminal region (26-48). This interaction may be important, since chitin is a component of the fungal cell wall, as well as of the crab exoskeleton (permitting a possible action of arasin in wound healing in case of lesions). Disulfide bonds are important for activity especially against Gram-negative bacteria, since the linearization of the peptide causes a strong decrease of activity on these bacteria. In terms of tissue distribution, mainly expressed in hemocytes. No or very low expression in heart, gills, inestines, and epidermis.

In terms of biological role, antimicrobial peptide that has a large activity spectrum with activity against Gram-positive, Gram-negative bacteria, as well as against fungi. Shows activity at micromolar concentrations. Displays minimal inhibitory concentration (MIC) values lower than minimal bactericidal concentrations (MBC). May have a dual mode of action depending on the peptide concentrations. At MIC concentrations, the peptide penetrates into the cytoplasm of target cells (tested on the Gram-negative E.coli). The two inner membrane proteins YgdD and SbmA may be required for this uptake. At concentrations higher than MIC, arasin may act by disrupting membranes. Does not show hemolytic activity. This Hyas araneus (Atlantic lyre crab) protein is Arasin 2.